Reading from the N-terminus, the 204-residue chain is Inner membrane-spanning protein YciB (204 aa).

Helical transmembrane passes span 3–23 (AEIS…VFFF), 45–65 (IFIA…VSWI), 70–90 (LPIM…LTLW), 107–127 (LFGV…GYVF), 145–165 (WGVF…MFTT), and 168–188 (WVAF…MAQM).

It belongs to the YciB family.

Its subcellular location is the cell inner membrane. Plays a role in cell envelope biogenesis, maintenance of cell envelope integrity and membrane homeostasis. The sequence is that of Inner membrane-spanning protein YciB from Agrobacterium fabrum (strain C58 / ATCC 33970) (Agrobacterium tumefaciens (strain C58)).